The sequence spans 320 residues: Thymidylate synthase (320 aa).

DUMP is bound by residues R27 and 182 to 183 (RR). The Nucleophile role is filled by C202. Residues 222–225 (RSAD), N233, and 263–265 (HIY) each bind dUMP. D225 lines the (6R)-5,10-methylene-5,6,7,8-tetrahydrofolate pocket. Residue A319 coordinates (6R)-5,10-methylene-5,6,7,8-tetrahydrofolate.

Belongs to the thymidylate synthase family. Bacterial-type ThyA subfamily. As to quaternary structure, homodimer.

It localises to the cytoplasm. It carries out the reaction dUMP + (6R)-5,10-methylene-5,6,7,8-tetrahydrofolate = 7,8-dihydrofolate + dTMP. Its pathway is pyrimidine metabolism; dTTP biosynthesis. In terms of biological role, catalyzes the reductive methylation of 2'-deoxyuridine-5'-monophosphate (dUMP) to 2'-deoxythymidine-5'-monophosphate (dTMP) while utilizing 5,10-methylenetetrahydrofolate (mTHF) as the methyl donor and reductant in the reaction, yielding dihydrofolate (DHF) as a by-product. This enzymatic reaction provides an intracellular de novo source of dTMP, an essential precursor for DNA biosynthesis. In Limosilactobacillus reuteri (strain DSM 20016) (Lactobacillus reuteri), this protein is Thymidylate synthase.